Consider the following 328-residue polypeptide: DNA-directed RNA polymerase subunit alpha (328 aa).

The tract at residues 1-232 (MHNSLAELIK…QHLAILVDLK (232 aa)) is alpha N-terminal domain (alpha-NTD). The alpha C-terminal domain (alpha-CTD) stretch occupies residues 246–328 (FDPLLLHPVD…PPEGLKKLNQ (83 aa)).

The protein belongs to the RNA polymerase alpha chain family. As to quaternary structure, homodimer. The RNAP catalytic core consists of 2 alpha, 1 beta, 1 beta' and 1 omega subunit. When a sigma factor is associated with the core the holoenzyme is formed, which can initiate transcription.

It carries out the reaction RNA(n) + a ribonucleoside 5'-triphosphate = RNA(n+1) + diphosphate. Functionally, DNA-dependent RNA polymerase catalyzes the transcription of DNA into RNA using the four ribonucleoside triphosphates as substrates. The sequence is that of DNA-directed RNA polymerase subunit alpha from Methylococcus capsulatus (strain ATCC 33009 / NCIMB 11132 / Bath).